Consider the following 360-residue polypeptide: uncharacterized protein (360 aa).

Transmembrane regions (helical) follow at residues 12–32 (ILPL…ITQI), 52–72 (VVLV…VIAV), 96–116 (IQLA…AYYI), 278–298 (IIWP…FLRY), 306–326 (FMPV…HFIL), and 336–356 (FIFA…YLLV).

It is found in the cell membrane. This is an uncharacterized protein from Rickettsia prowazekii (strain Madrid E).